Consider the following 23-residue polypeptide: 48 kDa cell wall protein (23 aa).

It is found in the secreted. The protein localises to the cell wall. This Nicotiana tabacum (Common tobacco) protein is 48 kDa cell wall protein.